The primary structure comprises 323 residues: Sphingolipid delta(4)-desaturase DES1 (323 aa).

Glycine 2 carries N-myristoyl glycine lipidation. The next 2 membrane-spanning stretches (helical) occupy residues proline 41 to valine 61 and tryptophan 68 to isoleucine 88. The Histidine box-1 signature appears at histidine 89–histidine 93. A helical membrane pass occupies residues tryptophan 104 to phenylalanine 124. The short motif at histidine 128–histidine 132 is the Histidine box-2 element. Helical transmembrane passes span phenylalanine 152–phenylalanine 172, histidine 184–phenylalanine 204, and valine 210–isoleucine 230. A Histidine box-3 motif is present at residues histidine 259 to histidine 263. Serine 307 is modified (phosphoserine).

It belongs to the fatty acid desaturase type 1 family. DEGS subfamily. In terms of assembly, interacts with RLBP1; the interaction increases synthesis of chromophore-precursors by DEGS1. Myristoylation can target the enzyme to the mitochondria leading to an increase in ceramide levels.

The protein localises to the mitochondrion membrane. It localises to the endoplasmic reticulum membrane. The catalysed reaction is an N-acylsphinganine + 2 Fe(II)-[cytochrome b5] + O2 + 2 H(+) = an N-acylsphing-4-enine + 2 Fe(III)-[cytochrome b5] + 2 H2O. The enzyme catalyses all-trans-retinol = 11-cis-retinol. It carries out the reaction all-trans-retinol = 9-cis-retinol. It catalyses the reaction all-trans-retinol = 13-cis-retinol. The catalysed reaction is 11-cis-retinol = 13-cis-retinol. The enzyme catalyses 11-cis-retinol = 9-cis-retinol. Functionally, has sphingolipid-delta-4-desaturase activity. Converts D-erythro-sphinganine to D-erythro-sphingosine (E-sphing-4-enine). Catalyzes the equilibrium isomerization of retinols. The polypeptide is Sphingolipid delta(4)-desaturase DES1 (Rattus norvegicus (Rat)).